A 256-amino-acid polypeptide reads, in one-letter code: Undecaprenyl-diphosphatase 2 (256 aa).

A run of 8 helical transmembrane segments spans residues 1–21 (MDIF…FLPI), 38–58 (ATAT…LAVL), 70–90 (LNLW…AFIF), 97–117 (LFNV…FLLL), 134–154 (VTYK…IPGT), 175–195 (AEFS…YDLL), 208–228 (ALAV…KLFI), and 236–256 (FVSF…IAYV).

The protein belongs to the UppP family.

The protein resides in the cell inner membrane. It carries out the reaction di-trans,octa-cis-undecaprenyl diphosphate + H2O = di-trans,octa-cis-undecaprenyl phosphate + phosphate + H(+). In terms of biological role, catalyzes the dephosphorylation of undecaprenyl diphosphate (UPP). Confers resistance to bacitracin. This is Undecaprenyl-diphosphatase 2 from Pseudoalteromonas translucida (strain TAC 125).